Reading from the N-terminus, the 95-residue chain is Large ribosomal subunit protein eL43 (95 aa).

The C4-type zinc finger occupies 38-59; that stretch reads CPDCGSEAVSREGTGIWQCGKC.

It belongs to the eukaryotic ribosomal protein eL43 family. It depends on Zn(2+) as a cofactor.

This chain is Large ribosomal subunit protein eL43, found in Halobacterium salinarum (strain ATCC 29341 / DSM 671 / R1).